The primary structure comprises 86 residues: Anti-adapter protein IraP (86 aa).

The stretch at 1–38 forms a coiled coil; the sequence is MKNLIAELLVKLAQKEEEAKELTVQVEALEIVVTALLR.

This sequence belongs to the IraP family. In terms of assembly, interacts with RssB.

It is found in the cytoplasm. Its function is as follows. Inhibits RpoS proteolysis by regulating RssB activity, thereby increasing the stability of the sigma stress factor RpoS especially during phosphate starvation, but also in stationary phase and during nitrogen starvation. Its effect on RpoS stability is due to its interaction with RssB, which probably blocks the interaction of RssB with RpoS, and the consequent delivery of the RssB-RpoS complex to the ClpXP protein degradation pathway. This is Anti-adapter protein IraP from Klebsiella pneumoniae (strain 342).